The primary structure comprises 521 residues: Protein nucleotidyltransferase YdiU (521 aa).

ATP contacts are provided by G109, G111, R112, K131, D143, G144, R194, and R201. Catalysis depends on D270, which acts as the Proton acceptor. Mg(2+) contacts are provided by N271 and D280. D280 provides a ligand contact to ATP.

It belongs to the SELO family. Mg(2+) serves as cofactor. It depends on Mn(2+) as a cofactor.

The enzyme catalyses L-seryl-[protein] + ATP = 3-O-(5'-adenylyl)-L-seryl-[protein] + diphosphate. It catalyses the reaction L-threonyl-[protein] + ATP = 3-O-(5'-adenylyl)-L-threonyl-[protein] + diphosphate. The catalysed reaction is L-tyrosyl-[protein] + ATP = O-(5'-adenylyl)-L-tyrosyl-[protein] + diphosphate. It carries out the reaction L-histidyl-[protein] + UTP = N(tele)-(5'-uridylyl)-L-histidyl-[protein] + diphosphate. The enzyme catalyses L-seryl-[protein] + UTP = O-(5'-uridylyl)-L-seryl-[protein] + diphosphate. It catalyses the reaction L-tyrosyl-[protein] + UTP = O-(5'-uridylyl)-L-tyrosyl-[protein] + diphosphate. Functionally, nucleotidyltransferase involved in the post-translational modification of proteins. It can catalyze the addition of adenosine monophosphate (AMP) or uridine monophosphate (UMP) to a protein, resulting in modifications known as AMPylation and UMPylation. In Burkholderia mallei (strain ATCC 23344), this protein is Protein nucleotidyltransferase YdiU.